The following is a 312-amino-acid chain: tRNA-cytidine(32) 2-sulfurtransferase (312 aa).

A PP-loop motif motif is present at residues 47 to 52 (SGGKDS). [4Fe-4S] cluster contacts are provided by cysteine 122, cysteine 125, and cysteine 213.

This sequence belongs to the TtcA family. In terms of assembly, homodimer. Mg(2+) serves as cofactor. It depends on [4Fe-4S] cluster as a cofactor.

It is found in the cytoplasm. The catalysed reaction is cytidine(32) in tRNA + S-sulfanyl-L-cysteinyl-[cysteine desulfurase] + AH2 + ATP = 2-thiocytidine(32) in tRNA + L-cysteinyl-[cysteine desulfurase] + A + AMP + diphosphate + H(+). Its pathway is tRNA modification. Catalyzes the ATP-dependent 2-thiolation of cytidine in position 32 of tRNA, to form 2-thiocytidine (s(2)C32). The sulfur atoms are provided by the cysteine/cysteine desulfurase (IscS) system. The sequence is that of tRNA-cytidine(32) 2-sulfurtransferase from Actinobacillus succinogenes (strain ATCC 55618 / DSM 22257 / CCUG 43843 / 130Z).